A 207-amino-acid chain; its full sequence is NADH-quinone oxidoreductase subunit A (207 aa).

Transmembrane regions (helical) follow at residues 6–26 (LSAIAFILAAIGLVVFMLVVP), 62–82 (LVAIFFVIFDLEALYLYAYAV), and 87–107 (AGWLGFAAAAIFITILIIGLV).

This sequence belongs to the complex I subunit 3 family. NDH-1 is composed of 14 different subunits. Subunits NuoA, H, J, K, L, M, N constitute the membrane sector of the complex.

It localises to the cell inner membrane. It carries out the reaction a quinone + NADH + 5 H(+)(in) = a quinol + NAD(+) + 4 H(+)(out). NDH-1 shuttles electrons from NADH, via FMN and iron-sulfur (Fe-S) centers, to quinones in the respiratory chain. The immediate electron acceptor for the enzyme in this species is believed to be ubiquinone. Couples the redox reaction to proton translocation (for every two electrons transferred, four hydrogen ions are translocated across the cytoplasmic membrane), and thus conserves the redox energy in a proton gradient. This chain is NADH-quinone oxidoreductase subunit A, found in Psychrobacter cryohalolentis (strain ATCC BAA-1226 / DSM 17306 / VKM B-2378 / K5).